We begin with the raw amino-acid sequence, 712 residues long: DNA ligase (712 aa).

Positions 1–22 (MVQKNEHQGGQSQHSLFAAGPT) are disordered. NAD(+)-binding positions include 53 to 57 (DDQFD) and Asp138. Lys140 serves as the catalytic N6-AMP-lysine intermediate. 4 residues coordinate NAD(+): Arg161, Glu199, Lys318, and Lys342. Cys436, Cys439, Cys454, and Cys459 together coordinate Zn(2+). The interval 612–631 (RGGRSGGGSSGSTGEGGLAS) is disordered. Gly residues predominate over residues 614-630 (GRSGGGSSGSTGEGGLA). The BRCT domain occupies 629 to 712 (LASGPLAGKN…MLREAKAASE (84 aa)).

This sequence belongs to the NAD-dependent DNA ligase family. LigA subfamily. The cofactor is Mg(2+). Mn(2+) is required as a cofactor.

The enzyme catalyses NAD(+) + (deoxyribonucleotide)n-3'-hydroxyl + 5'-phospho-(deoxyribonucleotide)m = (deoxyribonucleotide)n+m + AMP + beta-nicotinamide D-nucleotide.. In terms of biological role, DNA ligase that catalyzes the formation of phosphodiester linkages between 5'-phosphoryl and 3'-hydroxyl groups in double-stranded DNA using NAD as a coenzyme and as the energy source for the reaction. It is essential for DNA replication and repair of damaged DNA. This Desulfovibrio desulfuricans (strain ATCC 27774 / DSM 6949 / MB) protein is DNA ligase.